We begin with the raw amino-acid sequence, 207 residues long: A disintegrin and metalloproteinase with thrombospondin motifs 5 (207 aa).

Residues 1 to 74 (HAAFTVAHEI…GHGNCLLDLP (74 aa)) form the Peptidase M12B domain. H8 lines the Zn(2+) pocket. E9 is a catalytic residue. Zn(2+)-binding residues include H12 and H18. Cystine bridges form between C24-C53, C95-C117, C106-C127, C112-C146, and C140-C151. In terms of domain architecture, Disintegrin spans 83–164 (ELPGQTYDAS…TKKKYYSTSS (82 aa)). An N-linked (GlcNAc...) asparagine glycan is attached at N96. A TSP type-1 domain is found at 165-205 (HGNWGSWGSWGQCSRSCGGGVQFAYRHCNNPAPKNNGRYCT). Residues W168 and W171 are each glycosylated (C-linked (Man) tryptophan). The O-linked (Fuc...) serine glycan is linked to S180.

The cofactor is Zn(2+). In terms of processing, the precursor is cleaved by furin and PCSK7 outside of the cell. Glycosylated. Can be O-fucosylated by POFUT2 on a serine or a threonine residue found within the consensus sequence C1-X(2)-(S/T)-C2-G of the TSP type-1 repeat domains where C1 and C2 are the first and second cysteine residue of the repeat, respectively. Fucosylated repeats can then be further glycosylated by the addition of a beta-1,3-glucose residue by the glucosyltransferase, B3GALTL. Fucosylation mediates the efficient secretion of ADAMTS family members. Can also be C-glycosylated with one or two mannose molecules on tryptophan residues within the consensus sequence W-X-X-W of the TPRs, and N-glycosylated. These other glycosylations can also facilitate secretion.

The protein localises to the secreted. The protein resides in the extracellular space. Its subcellular location is the extracellular matrix. Its function is as follows. Metalloproteinase that plays an important role in connective tissue organization, development, inflammation and cell migration. Extracellular matrix (ECM) degrading enzyme that shows proteolytic activity toward the hyalectan group of chondroitin sulfate proteoglycans (CSPGs) including ACAN, VCAN, BCAN and NCAN. Cleavage within the hyalectans occurs at Glu-Xaa recognition motifs. Plays a role in embryonic development, including limb and cardiac morphogenesis, and skeletal muscle development through its VCAN remodeling properties. Cleaves VCAN in the pericellular matrix surrounding myoblasts, facilitating myoblast contact and fusion which is required for skeletal muscle development and regeneration. Participates in the development of brown adipose tissue and browning of white adipose tissue. Plays an important role for T-lymphocyte migration from draining lymph nodes following viral infection. This is A disintegrin and metalloproteinase with thrombospondin motifs 5 (ADAMTS5) from Bos taurus (Bovine).